The primary structure comprises 94 residues: Putative regulatory protein THA_332 (94 aa).

It belongs to the RemA family.

The protein is Putative regulatory protein THA_332 of Thermosipho africanus (strain TCF52B).